Reading from the N-terminus, the 195-residue chain is Probable molybdenum cofactor guanylyltransferase (195 aa).

Residues Leu-8–Gly-10, Lys-20, Asp-65, and Asp-96 contribute to the GTP site. Mg(2+) is bound at residue Asp-96.

The protein belongs to the MobA family. The cofactor is Mg(2+).

It localises to the cytoplasm. It catalyses the reaction Mo-molybdopterin + GTP + H(+) = Mo-molybdopterin guanine dinucleotide + diphosphate. Its function is as follows. Transfers a GMP moiety from GTP to Mo-molybdopterin (Mo-MPT) cofactor (Moco or molybdenum cofactor) to form Mo-molybdopterin guanine dinucleotide (Mo-MGD) cofactor. The sequence is that of Probable molybdenum cofactor guanylyltransferase from Bacillus licheniformis (strain ATCC 14580 / DSM 13 / JCM 2505 / CCUG 7422 / NBRC 12200 / NCIMB 9375 / NCTC 10341 / NRRL NRS-1264 / Gibson 46).